Consider the following 803-residue polypeptide: Translation initiation factor IF-2 (803 aa).

The span at 65 to 75 (PDKVEEKKEHT) shows a compositional bias: basic and acidic residues. Residues 65-186 (PDKVEEKKEH…PKSRKSKTLK (122 aa)) are disordered. Residues 175 to 185 (NKPKSRKSKTL) show a composition bias toward basic residues. The tr-type G domain occupies 300-468 (IRPPVVTIMG…ILLTADAALE (169 aa)). A G1 region spans residues 309–316 (GHVDHGKT). GTP is bound at residue 309–316 (GHVDHGKT). A G2 region spans residues 334 to 338 (GITQH). A G3 region spans residues 355 to 358 (DTPG). Residues 355 to 359 (DTPGH) and 409 to 412 (NKID) each bind GTP. The interval 409–412 (NKID) is G4. A G5 region spans residues 445 to 447 (SAK).

It belongs to the TRAFAC class translation factor GTPase superfamily. Classic translation factor GTPase family. IF-2 subfamily.

It localises to the cytoplasm. In terms of biological role, one of the essential components for the initiation of protein synthesis. Protects formylmethionyl-tRNA from spontaneous hydrolysis and promotes its binding to the 30S ribosomal subunits. Also involved in the hydrolysis of GTP during the formation of the 70S ribosomal complex. This is Translation initiation factor IF-2 from Tropheryma whipplei (strain Twist) (Whipple's bacillus).